Reading from the N-terminus, the 388-residue chain is Regulator of G-protein signaling 20 (388 aa).

The interval 138–199 is disordered; sequence PGRPSGGRPL…TPGAAPGQPG (62 aa). Residues 185–197 show a composition bias toward low complexity; the sequence is PAAQDTPGAAPGQ. One can recognise an RGS domain in the interval 262–378; sequence SFDKLMVTPA…MNSAVYKDLL (117 aa).

In terms of assembly, forms a complex with G(alpha)z/i2 subunits and mu-opioid receptors; the formation of this complex results in mu-opioid receptor desensitization. Interacts with OPRM1. Post-translationally, fatty acylated. Heavily palmitoylated in the cysteine string motif. In terms of processing, N- and O-glycosylated in synapsomal membranes. Serine phosphorylated in synapsomal membranes. Post-translationally, sumoylated with SUMO1 and SUMO2 in synaptosomes. The sumoylated forms act as a scaffold for sequestering mu-opioid receptor-activated G(alpha) subunits. Isoform 5 is expressed in brain at high levels in the caudate nucleus and temporal lobe.

It localises to the membrane. The protein resides in the nucleus. The protein localises to the cytoplasm. Inhibits signal transduction by increasing the GTPase activity of G protein alpha subunits thereby driving them into their inactive GDP-bound form. Binds selectively to G(z)-alpha and G(alpha)-i2 subunits, accelerates their GTPase activity and regulates their signaling activities. The G(z)-alpha activity is inhibited by the phosphorylation and palmitoylation of the G-protein. Negatively regulates mu-opioid receptor-mediated activation of the G-proteins. This Homo sapiens (Human) protein is Regulator of G-protein signaling 20 (RGS20).